Reading from the N-terminus, the 250-residue chain is Bacteriorhodopsin-II (250 aa).

The next 7 membrane-spanning stretches (helical) occupy residues 14–34 (EGIW…YFMA), 49–69 (VITI…FFGF), 89–109 (YADW…LAGA), 114–134 (MASL…ATLM), 142–162 (AFWT…VVVV), 183–203 (IILV…EGLG), and 210–230 (ETLL…FILL). Lysine 222 bears the N6-(retinylidene)lysine mark.

Belongs to the archaeal/bacterial/fungal opsin family. Post-translationally, the covalent binding of retinal to the apoprotein, bacterioopsin, generates bacteriorhodopsin.

It localises to the membrane. Functionally, light-driven proton pump. The protein is Bacteriorhodopsin-II (xop1) of Haloarcula marismortui (strain ATCC 43049 / DSM 3752 / JCM 8966 / VKM B-1809) (Halobacterium marismortui).